The sequence spans 87 residues: Down syndrome critical region protein 10 (87 aa).

As to expression, expressed in placenta and testis.

In Homo sapiens (Human), this protein is Down syndrome critical region protein 10 (DSCR10).